A 124-amino-acid chain; its full sequence is Insulin growth factor-like family member 4 (124 aa).

Residues 1–19 form the signal peptide; the sequence is MVPRISAAIFIFELLGSNS. N-linked (GlcNAc...) asparagine glycans are attached at residues N57 and N84.

This sequence belongs to the IGFL family. As to expression, detected in the cerebellum.

Its subcellular location is the secreted. The protein is Insulin growth factor-like family member 4 (IGFL4) of Homo sapiens (Human).